The primary structure comprises 165 residues: S-ribosylhomocysteine lyase (165 aa).

Residues His54, His58, and Cys128 each contribute to the Fe cation site.

Belongs to the LuxS family. In terms of assembly, homodimer. It depends on Fe cation as a cofactor.

It carries out the reaction S-(5-deoxy-D-ribos-5-yl)-L-homocysteine = (S)-4,5-dihydroxypentane-2,3-dione + L-homocysteine. Functionally, involved in the synthesis of autoinducer 2 (AI-2) which is secreted by bacteria and is used to communicate both the cell density and the metabolic potential of the environment. The regulation of gene expression in response to changes in cell density is called quorum sensing. Catalyzes the transformation of S-ribosylhomocysteine (RHC) to homocysteine (HC) and 4,5-dihydroxy-2,3-pentadione (DPD). This chain is S-ribosylhomocysteine lyase, found in Helicobacter hepaticus (strain ATCC 51449 / 3B1).